Consider the following 463-residue polypeptide: Female germline-specific tumor suppressor gld-1 (463 aa).

Polar residues predominate over residues 1 to 10 (MPSCTTPTYG). The interval 1-76 (MPSCTTPTYG…RAPPPARLTL (76 aa)) is disordered. Over residues 11–31 (VSTQLESQSSESPSRSSVMTP) the composition is skewed to low complexity. The qua1 domain; involved in homodimerization stretch occupies residues 135 to 205 (PTATEPIEVE…PEPAGDMISI (71 aa)). The 53-residue stretch at 208-260 (KIYVPKNEYPDYNFVGRILGPRGMTAKQLEQDTGCKIMVRGKGSMRDKSKESA) folds into the KH domain. Residues 305–336 (APEGTDELKRKQLMELAIINGTYRPMKSPNPA) are qua2 domain; involved in RNA binding. Positions 443-463 (NTNVSPSGASPSASSVNNTSF) are disordered. Over residues 447–457 (SPSGASPSASS) the composition is skewed to low complexity.

Homodimer. Post-translationally, phosphorylated by cdk-2 which may negatively regulate its expression in distal mitotic germline cells. In terms of processing, undergoes proteasomal degradation in proximal oocytes following mating. Expressed in proximal and distal oocytes in female worms but is eliminated from proximal oocytes following mating.

Functionally, RNA-binding protein which recognizes the 5'-UACUCAU-3' RNA consensus sequence. Binds sequences in both the 5'coding and the 3'-UTR region of rme-2 mRNA. Binds sequences in the 3'-UTR region of cye-1 mRNA. Binds to cyb-2.1, cyb-2.2 and cyb-3 mRNA. Binds sequences in the 3'-UTR region of tra-2 mRNA. Binds to the 3' UTR of Notch receptor homolog glp-1, thereby repressing glp-1 translation in the embryo. Binding to the glp-1 3' UTR is inhibited by pos-1 binding to an overlapping binding site in the glp-1 3' UTR. Germ line-specific tumor suppressor essential for oogenesis. Controls the spatial pattern of translation of multiple oogenesis specific mRNAs (e.g. yolk receptor rme-2) by repression of translation during early meiotic prophase (leptotene to pachytene) and then derepression of translation during diplotene/ diakinesis, following its degradation. Also functions to promote the male sexual fate in the hermaphrodite germline but not the male germline. Represses translation of the vacuolar ATPase component vha-13 in the distal gonad. Functions redundantly with gld-2 to promote the initiation of meiotic development and/or inhibit stem cell proliferation. By regulating cye-1 expression, prevents entry into mitosis in meiotic germline cells. The protein is Female germline-specific tumor suppressor gld-1 (gld-1) of Caenorhabditis elegans.